The following is a 526-amino-acid chain: Phosphoenolpyruvate carboxykinase (ATP) (526 aa).

Arginine 55, tyrosine 190, and lysine 196 together coordinate substrate. ATP contacts are provided by residues lysine 196, histidine 215, and 231 to 239 (GLSGTGKTT). Mn(2+) is bound by residues lysine 196 and histidine 215. Residue aspartate 252 participates in Mn(2+) binding. The ATP site is built by glutamate 280, arginine 317, and threonine 442. Arginine 317 contributes to the substrate binding site.

It belongs to the phosphoenolpyruvate carboxykinase (ATP) family. Mn(2+) is required as a cofactor.

The protein localises to the cytoplasm. It carries out the reaction oxaloacetate + ATP = phosphoenolpyruvate + ADP + CO2. It participates in carbohydrate biosynthesis; gluconeogenesis. Involved in the gluconeogenesis. Catalyzes the conversion of oxaloacetate (OAA) to phosphoenolpyruvate (PEP) through direct phosphoryl transfer between the nucleoside triphosphate and OAA. This Alkaliphilus oremlandii (strain OhILAs) (Clostridium oremlandii (strain OhILAs)) protein is Phosphoenolpyruvate carboxykinase (ATP).